A 247-amino-acid polypeptide reads, in one-letter code: Carboxy-S-adenosyl-L-methionine synthase (247 aa).

S-adenosyl-L-methionine is bound by residues Tyr-39, Gly-64 to Ser-66, Asp-89 to Asn-90, Asp-117 to Ile-118, Asn-132, and Arg-199.

The protein belongs to the class I-like SAM-binding methyltransferase superfamily. Cx-SAM synthase family. As to quaternary structure, homodimer.

It catalyses the reaction prephenate + S-adenosyl-L-methionine = carboxy-S-adenosyl-L-methionine + 3-phenylpyruvate + H2O. In terms of biological role, catalyzes the conversion of S-adenosyl-L-methionine (SAM) to carboxy-S-adenosyl-L-methionine (Cx-SAM). This Shigella sonnei (strain Ss046) protein is Carboxy-S-adenosyl-L-methionine synthase.